The chain runs to 142 residues: Large ribosomal subunit protein uL13 (142 aa).

The protein belongs to the universal ribosomal protein uL13 family. Part of the 50S ribosomal subunit.

Its function is as follows. This protein is one of the early assembly proteins of the 50S ribosomal subunit, although it is not seen to bind rRNA by itself. It is important during the early stages of 50S assembly. This chain is Large ribosomal subunit protein uL13, found in Pseudoalteromonas translucida (strain TAC 125).